Consider the following 475-residue polypeptide: Tetratricopeptide repeat protein 29 (475 aa).

TPR repeat units follow at residues 92–131, 136–173, 182–215, 234–267, 274–307, 314–347, and 354–387; these read DALR…EDAE, FEDV…AQLI, AEAH…TQGR, LRTY…AKEG, AEAS…STDL, GRGY…ARNN, and VRAS…TVEL. The tract at residues 437-475 is disordered; the sequence is IEPDPVTEEFRGSTVEAVSQNSERLEELSRFPGDQKNET. Residues 459–475 show a composition bias toward basic and acidic residues; the sequence is ERLEELSRFPGDQKNET.

As to expression, expressed in spermatozoa (at protein level).

The protein localises to the cytoplasm. It localises to the cytoskeleton. Its subcellular location is the flagellum axoneme. Functionally, axonemal protein which is implicated in axonemal and/or peri-axonemal structure assembly and regulates flagellum assembly and beating and therefore sperm motility. The sequence is that of Tetratricopeptide repeat protein 29 (TTC29) from Homo sapiens (Human).